The chain runs to 883 residues: Protein argonaute 16 (883 aa).

The 113-residue stretch at 254-366 (PVFDFLLTNQ…VPIELCHMVS (113 aa)) folds into the PAZ domain. A Piwi domain is found at 535-844 (FLLCVLPERK…AAAQMGQFMK (310 aa)).

It belongs to the argonaute family. Ago subfamily.

In terms of biological role, probably involved in the RNA silencing pathway. May bind to short RNAs such as microRNAs (miRNAs) or short interfering RNAs (siRNAs), and represses the translation of mRNAs which are complementary to them. The sequence is that of Protein argonaute 16 (AGO16) from Oryza sativa subsp. japonica (Rice).